Reading from the N-terminus, the 265-residue chain is Esterase claE (265 aa).

Active-site charge relay system residues include S121, D211, and H239.

Belongs to the LovG family.

Its pathway is secondary metabolite biosynthesis. Its function is as follows. Esterase; part of the cla gene cluster that produces clavatol and ortho-quinone methide. The clavatol biosynthesis cluster cla and the terrestric acid cluster tra are both involved in the production of peniphenones and penilactones. The non-reducing PKS claF is responsible for the formation of clavatol from successive condensations of 3 malonyl-CoA units, presumably with a simple acetyl-CoA starter unit, and 2 methylation steps. The esterase claE probably collaborates with claF by catalyzing the hydrolysis of ACP-bound acyl intermediates to free the ACP from stalled intermediates. The clavatol oxidase claD then converts clavatol to hydroxyclavatol. Spontaneous dehydration of hydroxyclavatol leads to the accumulation of the highly active ortho-quinone methide. On the other hand, the PKS-NRPS hybrid traA is involved in the formation of crustosic acid, with the help of traB and traD. The polyketide synthase module (PKS) of traA is responsible for the synthesis of the polyketide backbone via the condensation of an acetyl-CoA starter unit with 3 malonyl-CoA units. The downstream nonribosomal peptide synthetase (NRPS) module then amidates the carboxyl end of the polyketide with L-malic acid. Because traA lacks a designated enoylreductase (ER) domain, the required activity is provided the enoyl reductase traG. Crustosic acid undergoes decarboxylation and isomerization to the terrestric acid, catalyzed by the 2-oxoglutarate-dependent dioxygenase traH. Both acids are further converted to the 2 gamma-butyrolactones (R)-5-methyltetronic acid and (S)-5-carboxylmethyltetronic acid, with involvement of the cytochrome P450 monooxygenase claJ. Spontaneous addition of the methide to these gamma-butyrolactones leads to peniphenone D and penilactone D, which undergo again stereospecific attacking by methide to give penilactones A and B. The sequence is that of Esterase claE from Penicillium crustosum (Blue mold fungus).